A 217-amino-acid chain; its full sequence is Thymidylate kinase (217 aa).

16-23 (GIDGAGKT) serves as a coordination point for ATP.

It belongs to the thymidylate kinase family.

It catalyses the reaction dTMP + ATP = dTDP + ADP. Its function is as follows. Phosphorylation of dTMP to form dTDP in both de novo and salvage pathways of dTTP synthesis. This chain is Thymidylate kinase, found in Xylella fastidiosa (strain M23).